Reading from the N-terminus, the 550-residue chain is Nucleoside hydrolase 4 (550 aa).

This sequence belongs to the IUNH family.

It is found in the cytoplasm. In terms of biological role, may be involved in the degradation of nucleosides. The chain is Nucleoside hydrolase 4 from Arabidopsis thaliana (Mouse-ear cress).